The following is a 2225-amino-acid chain: Multifunctional protein CAD (2225 aa).

Position 2 is an N-acetylalanine (alanine 2). Residues 2 to 365 (AALVLEDGSV…TVREAAAGNI (364 aa)) form a GATase (Glutamine amidotransferase) region. Residues serine 44, glycine 222, and glycine 224 each contribute to the L-glutamine site. Residues 177–363 (RICALDCGLK…LETVREAAAG (187 aa)) form the Glutamine amidotransferase type-1 domain. The active-site Nucleophile; for GATase activity is cysteine 252. L-glutamine contacts are provided by leucine 253, glutamine 256, asparagine 294, glycine 296, and phenylalanine 297. Residues histidine 336 and glutamate 338 each act as for GATase activity in the active site. Residues 366 to 394 (GGQTVRERLAQRLCPPELPIPGSGLPPPR) form a linker region. The segment at 395-933 (KVLILGSGGL…NTHDLDFRAP (539 aa)) is CPSase A. The tract at residues 395–1455 (KVLILGSGGL…APPLKVHVDC (1061 aa)) is CPSase (Carbamoyl-phosphate synthase). Threonine 456 carries the phosphothreonine; by MAPK1 modification. Residues arginine 515, arginine 555, glycine 561, glycine 562, lysine 592, glutamate 599, glycine 625, isoleucine 626, histidine 627, glutamine 668, and glutamate 682 each coordinate ATP. One can recognise an ATP-grasp 1 domain in the interval 519–711 (AARMAEIGEH…LAYVAAKLAL (193 aa)). 3 residues coordinate Mg(2+): glutamine 668, glutamate 682, and asparagine 684. Mn(2+) is bound by residues glutamine 668, glutamate 682, and asparagine 684. N6-acetyllysine is present on lysine 747. The tract at residues 934 to 1455 (HVLVLGSGVY…APPLKVHVDC (522 aa)) is CPSase B. Residue serine 1038 is modified to Phosphoserine. The 192-residue stretch at 1052-1243 (SRLLDTIGIS…LVALATRIIM (192 aa)) folds into the ATP-grasp 2 domain. Arginine 1088, lysine 1127, isoleucine 1129, glutamate 1134, glycine 1159, valine 1160, histidine 1161, serine 1162, glutamine 1202, and glutamate 1214 together coordinate ATP. Mg(2+) is bound by residues glutamine 1202, glutamate 1214, and asparagine 1216. Mn(2+)-binding residues include glutamine 1202, glutamate 1214, and asparagine 1216. Positions 1308–1462 (FKIPEKNILL…VDCMTSQKLV (155 aa)) constitute an MGS-like domain. Residue serine 1406 is modified to Phosphoserine; by PKA. Lysine 1411 is subject to N6-acetyllysine. The segment at 1456–1788 (MTSQKLVRLP…VKGTVRRVVL (333 aa)) is DHOase (dihydroorotase). The Zn(2+) site is built by histidine 1471 and histidine 1473. The (S)-dihydroorotate site is built by arginine 1475 and asparagine 1505. Zn(2+) is bound by residues lysine 1556, histidine 1590, cysteine 1613, histidine 1614, and glutamate 1637. The residue at position 1556 (lysine 1556) is an N6-carboxylysine. Arginine 1661 is a (S)-dihydroorotate binding site. Aspartate 1686 contacts Zn(2+). Residue aspartate 1686 is the For DHOase activity of the active site. (S)-dihydroorotate contacts are provided by histidine 1690 and proline 1702. Positions 1789–1917 (RGEVAYIDGQ…GLLHPQMSPL (129 aa)) are linker. The segment at 1815 to 1885 (GVVPQPPPST…VVEPELMGTP (71 aa)) is disordered. Over residues 1825–1834 (PATTEITTTP) the composition is skewed to low complexity. Serine 1859 bears the Phosphoserine mark. A compositionally biased stretch (basic and acidic residues) spans 1866 to 1878 (EEPKEKPPRKVVE). Threonine 1884 carries the post-translational modification Phosphothreonine. Serine 1900 and serine 1938 each carry phosphoserine. The segment at 1918 to 2225 (LHSLVGQHIL…ALLATVLGRF (308 aa)) is ATCase (Aspartate transcarbamylase). Carbamoyl phosphate-binding residues include arginine 1975 and threonine 1976. Residue lysine 2003 participates in L-aspartate binding. Carbamoyl phosphate-binding residues include arginine 2024, histidine 2052, and glutamine 2055. Positions 2085 and 2146 each coordinate L-aspartate. Carbamoyl phosphate contacts are provided by methionine 2185 and proline 2186.

In the N-terminal section; belongs to the CarA family. It in the 2nd section; belongs to the CarB family. The protein in the 3rd section; belongs to the metallo-dependent hydrolases superfamily. DHOase family. CAD subfamily. This sequence in the C-terminal section; belongs to the aspartate/ornithine carbamoyltransferase superfamily. ATCase family. As to quaternary structure, homohexamer. Interacts with CIPC. The cofactor is Zn(2+). Mg(2+) is required as a cofactor. Mn(2+) serves as cofactor. In terms of processing, activated by MAP kinase (Erk1/2) phosphorylation just prior to the S phase of the cell cycle, when the demand for pyrimidine nucleotides is greatest, and down-regulated as the cells emerge from S phase by protein kinase A (PKA) phosphorylation. Phosphorylation at Ser-1859 by RPS6KB1 downstream of MTOR promotes oligomerization and stimulates dihydroorotase activity. Phosphorylation at Ser-1406 reduces sensitivity to feedback inhibition by UTP.

The protein localises to the cytoplasm. It localises to the nucleus. The enzyme catalyses hydrogencarbonate + L-glutamine + 2 ATP + H2O = carbamoyl phosphate + L-glutamate + 2 ADP + phosphate + 2 H(+). It carries out the reaction L-glutamine + H2O = L-glutamate + NH4(+). The catalysed reaction is hydrogencarbonate + NH4(+) + 2 ATP = carbamoyl phosphate + 2 ADP + phosphate + 2 H(+). It catalyses the reaction carbamoyl phosphate + L-aspartate = N-carbamoyl-L-aspartate + phosphate + H(+). The enzyme catalyses (S)-dihydroorotate + H2O = N-carbamoyl-L-aspartate + H(+). It functions in the pathway pyrimidine metabolism; UMP biosynthesis via de novo pathway; (S)-dihydroorotate from bicarbonate: step 1/3. Its pathway is pyrimidine metabolism; UMP biosynthesis via de novo pathway; (S)-dihydroorotate from bicarbonate: step 2/3. The protein operates within pyrimidine metabolism; UMP biosynthesis via de novo pathway; (S)-dihydroorotate from bicarbonate: step 3/3. Its activity is regulated as follows. Allosterically regulated and controlled by phosphorylation. 5-phosphoribose 1-diphosphate (PRPP) is an activator while UMP and UTP are inhibitors of the CPSase reaction. Multifunctional protein that encodes the first 3 enzymatic activities of the de novo pyrimidine pathway: carbamoylphosphate synthetase (CPSase; EC 6.3.5.5), aspartate transcarbamylase (ATCase; EC 2.1.3.2) and dihydroorotase (DHOase; EC 3.5.2.3). The CPSase-function is accomplished in 2 steps, by a glutamine-dependent amidotransferase activity (GATase) that binds and cleaves glutamine to produce ammonia, followed by an ammonium-dependent carbamoyl phosphate synthetase, which reacts with the ammonia, hydrogencarbonate and ATP to form carbamoyl phosphate. The endogenously produced carbamoyl phosphate is sequestered and channeled to the ATCase active site. ATCase then catalyzes the formation of carbamoyl-L-aspartate from L-aspartate and carbamoyl phosphate. In the last step, DHOase catalyzes the cyclization of carbamoyl aspartate to dihydroorotate. The sequence is that of Multifunctional protein CAD (Cad) from Mus musculus (Mouse).